The chain runs to 157 residues: MSRNTEELQGISLLGNQKTRYPTGYAPEILEAFDNKHPDNDYFVKFVCPEFTSLCPMTGQPDFATIYIRYIPHIKMVESKSLKLYLFSFRNHGDFHEDCVNIIMKDLIALMDPKYIEVFGEFTPRGGIAIHPFANYGKAGTEFETLARKRLFEHDSQ.

The active-site Thioimide intermediate is cysteine 55. Residue aspartate 62 is the Proton donor of the active site. Substrate-binding positions include 77-79 and 96-97; these read VES and HE.

This sequence belongs to the GTP cyclohydrolase I family. QueF type 1 subfamily.

Its subcellular location is the cytoplasm. It carries out the reaction 7-aminomethyl-7-carbaguanine + 2 NADP(+) = 7-cyano-7-deazaguanine + 2 NADPH + 3 H(+). It functions in the pathway tRNA modification; tRNA-queuosine biosynthesis. Its function is as follows. Catalyzes the NADPH-dependent reduction of 7-cyano-7-deazaguanine (preQ0) to 7-aminomethyl-7-deazaguanine (preQ1). This is NADPH-dependent 7-cyano-7-deazaguanine reductase from Neisseria meningitidis serogroup C / serotype 2a (strain ATCC 700532 / DSM 15464 / FAM18).